We begin with the raw amino-acid sequence, 75 residues long: Toxin-like peptide AaF1CA7 (75 aa).

The first 22 residues, 1–22, serve as a signal peptide directing secretion; sequence MMKLMLFSIIVILFSLIGSIHG. One can recognise an LCN-type CS-alpha/beta domain in the interval 25–75; the sequence is VPGNYPLDSSDDTYLCAPLGENPSCIQICRKHGVKYGYCYAFQCWCEYFGR. Intrachain disulfides connect Cys40-Cys63, Cys49-Cys68, and Cys53-Cys70.

Belongs to the long (3 C-C) scorpion toxin superfamily. As to expression, expressed by the venom gland.

The protein resides in the secreted. Its function is as follows. Probable neurotoxin that inhibits ion channels. The polypeptide is Toxin-like peptide AaF1CA7 (Androctonus australis (Sahara scorpion)).